A 69-amino-acid chain; its full sequence is Mitotic-spindle organizing protein 1 (69 aa).

This sequence belongs to the MOZART1 family. In terms of assembly, part of the gamma-tubulin complex.

The protein resides in the cytoplasm. It localises to the cytoskeleton. The protein localises to the microtubule organizing center. It is found in the spindle. Required for gamma-tubulin complex recruitment to the microtubule organizing centers (MTOCs). This chain is Mitotic-spindle organizing protein 1, found in Picea sitchensis (Sitka spruce).